The following is a 204-amino-acid chain: FMN-dependent NADH:quinone oxidoreductase 1 (204 aa).

Residues serine 14, 20-22 (SMS), and 99-102 (MYNF) each bind FMN.

The protein belongs to the azoreductase type 1 family. As to quaternary structure, homodimer. FMN is required as a cofactor.

The enzyme catalyses 2 a quinone + NADH + H(+) = 2 a 1,4-benzosemiquinone + NAD(+). It carries out the reaction N,N-dimethyl-1,4-phenylenediamine + anthranilate + 2 NAD(+) = 2-(4-dimethylaminophenyl)diazenylbenzoate + 2 NADH + 2 H(+). In terms of biological role, quinone reductase that provides resistance to thiol-specific stress caused by electrophilic quinones. Also exhibits azoreductase activity. Catalyzes the reductive cleavage of the azo bond in aromatic azo compounds to the corresponding amines. The sequence is that of FMN-dependent NADH:quinone oxidoreductase 1 from Hahella chejuensis (strain KCTC 2396).